Reading from the N-terminus, the 826-residue chain is Ribonucleoside-diphosphate reductase large subunit (826 aa).

Substrate is bound by residues Thr-171, 186–187 (SC), Gly-217, 387–391 (NLCAE), and 594–598 (PTSGC). A disulfide bond links Cys-187 and Cys-403. The Proton acceptor role is filled by Asn-387. Cys-389 (cysteine radical intermediate) is an active-site residue. The Proton acceptor role is filled by Glu-391. The disordered stretch occupies residues 747-769 (SVPREEQNERSPAEQMPPRPMEP). Positions 749 to 758 (PREEQNERSP) are enriched in basic and acidic residues.

This sequence belongs to the ribonucleoside diphosphate reductase large chain family. As to quaternary structure, heterotetramer composed of a homodimer of the large subunit (R1) and a homodimer of the small subunit (R2). Larger multisubunit protein complex are also active, composed of (R1)n(R2)n.

It catalyses the reaction a 2'-deoxyribonucleoside 5'-diphosphate + [thioredoxin]-disulfide + H2O = a ribonucleoside 5'-diphosphate + [thioredoxin]-dithiol. In terms of biological role, ribonucleoside-diphosphate reductase holoenzyme provides the precursors necessary for viral DNA synthesis. Allows virus growth in non-dividing cells, as well as reactivation from latency in infected hosts. Catalyzes the biosynthesis of deoxyribonucleotides from the corresponding ribonucleotides. This Homo sapiens (Human) protein is Ribonucleoside-diphosphate reductase large subunit.